The sequence spans 744 residues: Protein zyg-11 homolog B (744 aa).

LRR repeat units follow at residues Leu-185–Lys-208, Met-216–Leu-236, and Lys-237–Gln-261.

It belongs to the zyg-11 family. In terms of assembly, (Microbial infection) Interacts with SARS-COV-2 protein ORF10. As to quaternary structure, interacts with ELOC/Elongin C. Part of an E3 ubiquitin ligase complex including ZYG11B, CUL2 and Elongin BC. (Microbial infection) Ubiquitinated; leading to proteasomal degradation in the presence of herpes simplex virus 1/HHV-1.

The protein resides in the cytoplasm. In terms of biological role, serves as substrate adapter subunit in the E3 ubiquitin ligase complex ZYG11B-CUL2-Elongin BC. Acts to target substrates bearing N-terminal degrons for proteasomal degradation with the first four residues of substrates being the key recognition elements. Prefers Nt-Gly but also has the capacity to recognize Nt-Ser, -Ala and -Cys. Involved in the clearance of proteolytic fragments generated by caspase cleavage during apoptosis since N-terminal glycine degrons are strongly enriched at caspase cleavage sites. Also important in the quality control of protein N-myristoylation in which N-terminal glycine degrons are conditionally exposed after a failure of N-myristoylation. In addition, plays a role in the amplification of cGAS to enhance innate immune response. Mechanistically, strengthens the processes of cGAS binding with dsDNA and assembling oligomers and also accelerates and stabilizes cGAS-DNA condensation, thereby enhancing production of antiviral IFNs and inflammatory cytokines. This chain is Protein zyg-11 homolog B, found in Homo sapiens (Human).